The sequence spans 834 residues: ATP-dependent DNA helicase fml1 (834 aa).

A Helicase ATP-binding domain is found at 80–248 (IVQKALFENV…NVIDSLHISR (169 aa)). Residue 93-100 (LPTGLGKT) participates in ATP binding. A DEAH box motif is present at residues 196 to 199 (DEAH). One can recognise a Helicase C-terminal domain in the interval 416–582 (HLERIVTEYF…GLSLSEKSYR (167 aa)). Residues 650–690 (EESPFEICPVTYSIEQEKKLEKYKRVCLRGLDIHRNRRLSQ) form an interaction with MHF complex region. A disordered region spans residues 738–769 (NSTDRDTKQPKMHDFRQPLHPNPMTTLKRKGQ). The span at 740–754 (TDRDTKQPKMHDFRQ) shows a compositional bias: basic and acidic residues.

The protein belongs to the DEAD box helicase family. DEAH subfamily. FANCM sub-subfamily.

The protein localises to the cytoplasm. It localises to the nucleus. It is found in the nucleolus. It carries out the reaction ATP + H2O = ADP + phosphate + H(+). In terms of biological role, ATP-dependent DNA helicase involved in DNA damage repair by homologous recombination and in genome maintenance. Capable of unwinding D-loops. Plays a role in limiting crossover recombination during mitotic DNA double-strand break (DSB) repair. Component of a FANCM-MHF complex which promotes gene conversion at blocked replication forks, probably by reversal of the stalled fork. FANCM-MHF also promotes non-crossover recombination in meiotic cells. The polypeptide is ATP-dependent DNA helicase fml1 (Schizosaccharomyces pombe (strain 972 / ATCC 24843) (Fission yeast)).